The primary structure comprises 607 residues: Matrix metalloproteinase-16 (607 aa).

An N-terminal signal peptide occupies residues 1–31 (MILLAFSSGRRLDFVHRSGVFFLQTLLWILC). Residues 32–119 (ATVCGTEQYF…SSKFNIRRKR (88 aa)) constitute a propeptide that is removed on maturation. Residue Asn83 is glycosylated (N-linked (GlcNAc...) asparagine). Residues 99–106 (PRCGVPDQ) carry the Cysteine switch motif. Position 101 (Cys101) interacts with Zn(2+). The Extracellular segment spans residues 120 to 564 (YALTGQKWQH…LDNTASTVKA (445 aa)). Residue Asp183 coordinates Ca(2+). Residues His193 and Asp195 each contribute to the Zn(2+) site. Ca(2+) is bound by residues Asp200, Gly201, Gly203, and Phe205. His208 contacts Zn(2+). Ca(2+) is bound by residues Gly215, Gly217, and Asp219. Zn(2+) is bound at residue His221. Ca(2+) contacts are provided by Asp223 and Glu226. His246 serves as a coordination point for Zn(2+). The active site involves Glu247. Residues His250 and His256 each contribute to the Zn(2+) site. A disordered region spans residues 281–340 (DDLQGIQKIYGPPDKIPPPTRPLPTVPPHRSVPPADPRRHDRPKPPRPPTGRPSYPGAKP). Residues 294 to 315 (DKIPPPTRPLPTVPPHRSVPPA) are compositionally biased toward pro residues. Hemopexin repeat units lie at residues 340-388 (PNIC…WRGL), 389-434 (PPSI…GNGI), 436-484 (PHGI…KGIP), and 485-532 (ESPQ…FMGC). Cys343 and Cys532 are joined by a disulfide. The chain crosses the membrane as a helical span at residues 565-585 (IAIVIPCILALCLLVLVYTVF). The Cytoplasmic segment spans residues 586-607 (QFKRKGTPRHILYCKRSMQEWV).

This sequence belongs to the peptidase M10A family. In terms of assembly, interacts with CSPG4 through CSPG4 chondroitin sulfate glycosaminoglycan. Zn(2+) serves as cofactor. The cofactor is Ca(2+). Post-translationally, the precursor is cleaved by a furin endopeptidase.

It localises to the cell membrane. In terms of biological role, endopeptidase that degrades various components of the extracellular matrix, such as collagen type III and fibronectin. Activates progelatinase A. Involved in the matrix remodeling of blood vessels. It has no effect on type I, II, IV and V collagen. However, upon interaction with CSPG4, it may be involved in degradation and invasion of type I collagen by melanoma cells. The polypeptide is Matrix metalloproteinase-16 (Mmp16) (Mus musculus (Mouse)).